A 140-amino-acid chain; its full sequence is Peptide methionine sulfoxide reductase MsrB (140 aa).

The MsrB domain maps to 10-132; that stretch reads EEDWKSVLTP…NSVSLGFTKE (123 aa). Zn(2+) is bound by residues Cys-49, Cys-52, Cys-98, and Cys-101. Cys-121 (nucleophile) is an active-site residue.

This sequence belongs to the MsrB Met sulfoxide reductase family. It depends on Zn(2+) as a cofactor.

The catalysed reaction is L-methionyl-[protein] + [thioredoxin]-disulfide + H2O = L-methionyl-(R)-S-oxide-[protein] + [thioredoxin]-dithiol. The chain is Peptide methionine sulfoxide reductase MsrB from Methanosarcina mazei (strain ATCC BAA-159 / DSM 3647 / Goe1 / Go1 / JCM 11833 / OCM 88) (Methanosarcina frisia).